Reading from the N-terminus, the 329-residue chain is uncharacterized protein (329 aa).

Helical transmembrane passes span 29-49, 78-98, 120-140, 164-184, 217-237, 260-280, and 299-319; these read IVLW…AISH, VLVA…CWMG, KKWL…SLLV, WMIG…LIYL, YFFL…LLVI, FFWT…SFIV, and GSSL…LLFI.

This sequence to M.pneumoniae MPN_129.

The protein resides in the cell membrane. This is an uncharacterized protein from Mycoplasma pneumoniae (strain ATCC 29342 / M129 / Subtype 1) (Mycoplasmoides pneumoniae).